The sequence spans 87 residues: Apolipoprotein C-I (87 aa).

Positions 1–26 are cleaved as a signal peptide; the sequence is MRLFLSLPVLVVVLAMVLEGPAPAQA.

The protein belongs to the apolipoprotein C1 family.

The protein resides in the secreted. Inhibitor of lipoprotein binding to the low density lipoprotein (LDL) receptor, LDL receptor-related protein, and very low density lipoprotein (VLDL) receptor. Associates with high density lipoproteins (HDL) and the triacylglycerol-rich lipoproteins in the plasma and makes up about 10% of the protein of the VLDL and 2% of that of HDL. Appears to interfere directly with fatty acid uptake and is also the major plasma inhibitor of cholesteryl ester transfer protein (CETP). Binds free fatty acids and reduces their intracellular esterification. Modulates the interaction of APOE with beta-migrating VLDL and inhibits binding of beta-VLDL to the LDL receptor-related protein. This is Apolipoprotein C-I (APOC1) from Zalophus californianus (California sealion).